Here is a 233-residue protein sequence, read N- to C-terminus: MPTSKKLKEALAKVDRSKSYTLKDGIELVKNTAFAKFTETVDVAVRLGVDPRHADQMVRGAVVLPNGLGKDVRVLVFAKGEKEKEARDAGADFVGADDLVAKIQEGWFDFDTAIATPDMMGVVGKIGKLLGPRGLMPNPKVGTVTFDVGRAVNESKSGKVEFRVEKAGIIHAPVGKVSFDADKLKENILALVDALVKSKPSAAKGTYIKKISVSSTMGPGVNLDVSDVSSQVV.

It belongs to the universal ribosomal protein uL1 family. As to quaternary structure, part of the 50S ribosomal subunit.

Its function is as follows. Binds directly to 23S rRNA. The L1 stalk is quite mobile in the ribosome, and is involved in E site tRNA release. In terms of biological role, protein L1 is also a translational repressor protein, it controls the translation of the L11 operon by binding to its mRNA. The sequence is that of Large ribosomal subunit protein uL1 from Geotalea uraniireducens (strain Rf4) (Geobacter uraniireducens).